A 464-amino-acid chain; its full sequence is MDYLPLFHKLQGGRVLVVGGGEIALRKARLLADAGAALRVVAPEVDGQLAALAREGGGEVLVRGYQAADLVGCRLVIAATDDPGLNAQVSADAQALCVPVNVVDAPALCTVIFPAIVDRSPLVVAVSSGGDAPVLARLIRAKLETWIPSTYGELAALAARFRHKVKSLYPDVNQRRGFWETVFQGPIAERQLAGQGAEAERLLQAMVDGAPVQQGGEVYLVGAGPGDPDLLTFRALRLMQQADVVLYDRLVAPAIIEMCRRDAERIYVGKRRAEHAVPQDQINRLLVDLAREGKRVLRLKGGDPFIFGRGGEEIEELAEHGIPFQVVPGITAASGCSAYGGIPLTHRDYAQSVRFVTGHLKDGTSNLPWNDLVAPNQTLVFYMGLVGLPTICAELIRHGRASSTPAALVQQGTTRNQRVFTGTLADLPALVAQHEVHAPTLVIVGEVVQLREKLAWFEGSQQDQ.

Residues 1 to 203 (MDYLPLFHKL…GQGAEAERLL (203 aa)) form a precorrin-2 dehydrogenase /sirohydrochlorin ferrochelatase region. Residues 22-23 (EI) and 43-44 (PE) each bind NAD(+). Ser-128 carries the phosphoserine modification. The tract at residues 216–464 (GEVYLVGAGP…AWFEGSQQDQ (249 aa)) is uroporphyrinogen-III C-methyltransferase. S-adenosyl-L-methionine is bound at residue Pro-225. Asp-248 serves as the catalytic Proton acceptor. The active-site Proton donor is Lys-270. S-adenosyl-L-methionine contacts are provided by residues 301-303 (GGD), Ile-306, 331-332 (TA), Met-383, and Gly-412.

The protein in the N-terminal section; belongs to the precorrin-2 dehydrogenase / sirohydrochlorin ferrochelatase family. It in the C-terminal section; belongs to the precorrin methyltransferase family.

It carries out the reaction uroporphyrinogen III + 2 S-adenosyl-L-methionine = precorrin-2 + 2 S-adenosyl-L-homocysteine + H(+). It catalyses the reaction precorrin-2 + NAD(+) = sirohydrochlorin + NADH + 2 H(+). The enzyme catalyses siroheme + 2 H(+) = sirohydrochlorin + Fe(2+). Its pathway is cofactor biosynthesis; adenosylcobalamin biosynthesis; precorrin-2 from uroporphyrinogen III: step 1/1. The protein operates within cofactor biosynthesis; adenosylcobalamin biosynthesis; sirohydrochlorin from precorrin-2: step 1/1. It functions in the pathway porphyrin-containing compound metabolism; siroheme biosynthesis; precorrin-2 from uroporphyrinogen III: step 1/1. It participates in porphyrin-containing compound metabolism; siroheme biosynthesis; siroheme from sirohydrochlorin: step 1/1. Its pathway is porphyrin-containing compound metabolism; siroheme biosynthesis; sirohydrochlorin from precorrin-2: step 1/1. Its function is as follows. Multifunctional enzyme that catalyzes the SAM-dependent methylations of uroporphyrinogen III at position C-2 and C-7 to form precorrin-2 via precorrin-1. Then it catalyzes the NAD-dependent ring dehydrogenation of precorrin-2 to yield sirohydrochlorin. Finally, it catalyzes the ferrochelation of sirohydrochlorin to yield siroheme. The sequence is that of Siroheme synthase from Pseudomonas putida (strain W619).